A 252-amino-acid polypeptide reads, in one-letter code: 5-oxoprolinase subunit A (252 aa).

This sequence belongs to the LamB/PxpA family. In terms of assembly, forms a complex composed of PxpA, PxpB and PxpC.

The enzyme catalyses 5-oxo-L-proline + ATP + 2 H2O = L-glutamate + ADP + phosphate + H(+). Its function is as follows. Catalyzes the cleavage of 5-oxoproline to form L-glutamate coupled to the hydrolysis of ATP to ADP and inorganic phosphate. The protein is 5-oxoprolinase subunit A of Bacillus cytotoxicus (strain DSM 22905 / CIP 110041 / 391-98 / NVH 391-98).